The following is a 60-amino-acid chain: MDTRLLELLVCPVTKGPLEYNREKQELTSRSARLAYPVRDGVPILLESEARTLSDEELGL.

It belongs to the UPF0434 family.

The polypeptide is UPF0434 protein Rfer_3156 (Albidiferax ferrireducens (strain ATCC BAA-621 / DSM 15236 / T118) (Rhodoferax ferrireducens)).